Consider the following 434-residue polypeptide: 26S proteasome regulatory subunit RPN6 (434 aa).

Residue S2 is modified to N-acetylserine. Positions 235 to 404 constitute a PCI domain; that stretch reads AFSYFFESFE…GWLYVYETPN (170 aa).

Belongs to the proteasome subunit S9 family. Component of the lid subcomplex of the 19S proteasome regulatory particle complex (also named PA700 complex). The 26S proteasome consists of a 20S proteasome core and two 19S regulatory subunits. N-acetylated by NAT1.

Functionally, component of the lid subcomplex of the 26S proteasome, a multiprotein complex involved in the ATP-dependent degradation of ubiquitinated proteins. In the complex, RPN6 is required for proteasome assembly. The protein is 26S proteasome regulatory subunit RPN6 (RPN6) of Saccharomyces cerevisiae (strain ATCC 204508 / S288c) (Baker's yeast).